The following is a 331-amino-acid chain: Ornithine carbamoyltransferase (331 aa).

Carbamoyl phosphate contacts are provided by residues 57 to 60, glutamine 82, arginine 106, and 133 to 136; these read STRT and HPTQ. L-ornithine-binding positions include asparagine 166, aspartate 230, and 234 to 235; that span reads SM. Carbamoyl phosphate contacts are provided by residues 272-273 and arginine 317; that span reads CL.

The protein belongs to the aspartate/ornithine carbamoyltransferase superfamily. OTCase family.

It is found in the cytoplasm. It catalyses the reaction carbamoyl phosphate + L-ornithine = L-citrulline + phosphate + H(+). The protein operates within amino-acid degradation; L-arginine degradation via ADI pathway; carbamoyl phosphate from L-arginine: step 2/2. Its function is as follows. Reversibly catalyzes the transfer of the carbamoyl group from carbamoyl phosphate (CP) to the N(epsilon) atom of ornithine (ORN) to produce L-citrulline. The chain is Ornithine carbamoyltransferase from Clostridium perfringens (strain SM101 / Type A).